The sequence spans 140 residues: MSIMQVEVVSSEQKIYSGEATFIVVPTVQGELGIYPRHEPIMSLVRPGALRLTVPGEDKEVLVAVSGGVLEVQPDKVTVLADVAVRSAEMDRARAEEAKKAAEAGISQAKDDKALAEAHKVLAAAIAQLKTLDYIRSHKK.

The protein belongs to the ATPase epsilon chain family. In terms of assembly, F-type ATPases have 2 components, CF(1) - the catalytic core - and CF(0) - the membrane proton channel. CF(1) has five subunits: alpha(3), beta(3), gamma(1), delta(1), epsilon(1). CF(0) has three main subunits: a, b and c.

Its subcellular location is the cell inner membrane. Produces ATP from ADP in the presence of a proton gradient across the membrane. The sequence is that of ATP synthase epsilon chain from Neisseria meningitidis serogroup B (strain ATCC BAA-335 / MC58).